The chain runs to 63 residues: Putative F-box protein At1g47702 (63 aa).

One can recognise an F-box domain in the interval 23 to 63 (KDRISDLPNRILGKIIVKLPLDEAVRIMALSKRWKSIWDDN).

The chain is Putative F-box protein At1g47702 from Arabidopsis thaliana (Mouse-ear cress).